The sequence spans 146 residues: Large ribosomal subunit protein uL15 (146 aa).

A disordered region spans residues 1-56 (MKLHELRAAEGANKASKRVGRGTGSGLGKTSGRGQNGQNSRSGGGVRPGFEGGQMP). Gly residues-rich tracts occupy residues 21–35 (RGTG…GRGQ) and 42–52 (SGGGVRPGFEG).

The protein belongs to the universal ribosomal protein uL15 family. In terms of assembly, part of the 50S ribosomal subunit.

Binds to the 23S rRNA. The sequence is that of Large ribosomal subunit protein uL15 from Clostridium botulinum (strain Okra / Type B1).